The primary structure comprises 746 residues: MDSAAKDEMQPALSPGPEWPEQERAEQLARGAALKWASGIFYRPEQLARLGQYRSREVQRTCSLESRLKSVMQSYLEGVQTGVWQLAQAIEVVQGTREALSQARGLLQGMSQALQTLEPLRERVAQHKQLQALSHLLPRLRAVPAAVSHTQTLIDGQQFLEAYVSLRELEQLREDTWAPLGGLELPVFQGLDLLFEALGQAVEAAAGAAGKLAREDPALLVAAVRVAEVETGRTTPLGQVPRDWRQRCLRALQEGLEQAHFGSPLLPAPGALPGWLEALRVALPVELATAEALVAPCCPPQYNVVQLWAHTLHSGLRRSLQNLLAGPELEAADAFALLHWALHVYLGQEMMGSLELGPEADVSQLEPLLTLENIEQLEATFVANIQASVSQWLQNALDGEVAEWGREHGPNTDPSGSYYSPMPAIVLQILEENIRVASLVSESLQQRVHGMALSELGTFLRSFSDALIRFSRDHFRGKSMAPHYVPYLLAALNHKSALSSSVSVLQLDGAPSGALAPVEAALDELQRRIYRLVLEALQAELQPLFADLPSRQWLSSPELLQSVCERTGRFCRDFWRVRNPTVQLLLAEAERAVVLQYLSALMQGRLVCRGADERTQAAERLRHDAAQLQQLFLSLGLEENAHCAPVLLALRELLNLRDPALLGLEVAGLRQQFPDVSEDHVSALLGLRGDLSREQHLAALSSLQAALPPSPRASRRVLFSLVPAPALAPASCLPSGSCARALLLAE.

A disordered region spans residues 1–23 (MDSAAKDEMQPALSPGPEWPEQE). Residues 1–370 (MDSAAKDEMQ…DVSQLEPLLT (370 aa)) form a mediates interaction with EXOC2, EXOC4 and EXOC5 region.

The protein belongs to the SEC6 family. As to quaternary structure, interacts with EXOC2, EXOC4 and EXOC5; may be part of the exocyst.

Its subcellular location is the cytoplasmic vesicle. It localises to the secretory vesicle. Its function is as follows. As part of the exocyst, may play a role in regulated exocytosis of insulin granules. The sequence is that of Exocyst complex component 3-like protein (EXOC3L1) from Homo sapiens (Human).